A 1284-amino-acid polypeptide reads, in one-letter code: DNA-directed RNA polymerase subunit beta (1284 aa).

This sequence belongs to the RNA polymerase beta chain family. As to quaternary structure, the RNAP catalytic core consists of 2 alpha, 1 beta, 1 beta' and 1 omega subunit. When a sigma factor is associated with the core the holoenzyme is formed, which can initiate transcription.

The enzyme catalyses RNA(n) + a ribonucleoside 5'-triphosphate = RNA(n+1) + diphosphate. In terms of biological role, DNA-dependent RNA polymerase catalyzes the transcription of DNA into RNA using the four ribonucleoside triphosphates as substrates. The sequence is that of DNA-directed RNA polymerase subunit beta from Mesoplasma florum (strain ATCC 33453 / NBRC 100688 / NCTC 11704 / L1) (Acholeplasma florum).